A 251-amino-acid polypeptide reads, in one-letter code: Coproheme decarboxylase (251 aa).

Fe-coproporphyrin III is bound by residues Arg-133, 147 to 151 (YPMSK), His-174, Gln-187, and Ser-225. Residue Tyr-147 is part of the active site.

Belongs to the ChdC family. Type 1 subfamily. Fe-coproporphyrin III is required as a cofactor.

The catalysed reaction is Fe-coproporphyrin III + 2 H2O2 + 2 H(+) = heme b + 2 CO2 + 4 H2O. It carries out the reaction Fe-coproporphyrin III + H2O2 + H(+) = harderoheme III + CO2 + 2 H2O. The enzyme catalyses harderoheme III + H2O2 + H(+) = heme b + CO2 + 2 H2O. It participates in porphyrin-containing compound metabolism; protoheme biosynthesis. Involved in coproporphyrin-dependent heme b biosynthesis. Catalyzes the decarboxylation of Fe-coproporphyrin III (coproheme) to heme b (protoheme IX), the last step of the pathway. The reaction occurs in a stepwise manner with a three-propionate intermediate. The chain is Coproheme decarboxylase from Listeria monocytogenes serotype 4b (strain CLIP80459).